A 487-amino-acid chain; its full sequence is 6-phosphogluconate dehydrogenase, decarboxylating 3, chloroplastic (487 aa).

Position 1 is an N-acetylmethionine (methionine 1). NADP(+) is bound by residues 13–18 (GLAVMG), 36–38 (NRT), 80–82 (VKA), and asparagine 108. Substrate-binding positions include asparagine 108 and 134–136 (SGG). The active-site Proton acceptor is lysine 188. Residue 191-192 (HN) coordinates substrate. The Proton donor role is filled by glutamate 195. Substrate contacts are provided by tyrosine 196, lysine 266, arginine 293, arginine 458, and histidine 464.

The protein belongs to the 6-phosphogluconate dehydrogenase family. As to quaternary structure, forms homodimer. Forms heterodimers with PGD1 or PGD2.

Its subcellular location is the plastid. The protein localises to the chloroplast. The protein resides in the cytoplasm. It is found in the cytosol. It carries out the reaction 6-phospho-D-gluconate + NADP(+) = D-ribulose 5-phosphate + CO2 + NADPH. Its pathway is carbohydrate degradation; pentose phosphate pathway; D-ribulose 5-phosphate from D-glucose 6-phosphate (oxidative stage): step 3/3. Functionally, catalyzes the oxidative decarboxylation of 6-phosphogluconate to ribulose 5-phosphate and CO(2), with concomitant reduction of NADP to NADPH. This Arabidopsis thaliana (Mouse-ear cress) protein is 6-phosphogluconate dehydrogenase, decarboxylating 3, chloroplastic.